The primary structure comprises 690 residues: Elongation factor G (690 aa).

One can recognise a tr-type G domain in the interval 8–283 (EDYRNFGIMA…AVVDFLPSPL (276 aa)). Residues 17 to 24 (AHIDAGKT), 81 to 85 (DTPGH), and 135 to 138 (NKMD) contribute to the GTP site.

It belongs to the TRAFAC class translation factor GTPase superfamily. Classic translation factor GTPase family. EF-G/EF-2 subfamily.

It localises to the cytoplasm. Its function is as follows. Catalyzes the GTP-dependent ribosomal translocation step during translation elongation. During this step, the ribosome changes from the pre-translocational (PRE) to the post-translocational (POST) state as the newly formed A-site-bound peptidyl-tRNA and P-site-bound deacylated tRNA move to the P and E sites, respectively. Catalyzes the coordinated movement of the two tRNA molecules, the mRNA and conformational changes in the ribosome. The chain is Elongation factor G from Nitrobacter hamburgensis (strain DSM 10229 / NCIMB 13809 / X14).